A 648-amino-acid polypeptide reads, in one-letter code: Macrolide export ATP-binding/permease protein MacB (648 aa).

An ABC transporter domain is found at 5-243 (LELKDIRRSY…AGGTEPVVNT (239 aa)). 41–48 (GASGSGKS) is a binding site for ATP. Helical transmembrane passes span 273–293 (LLTM…VVVG), 523–543 (LFLT…VMNI), 576–596 (AVLV…LIAF), and 600–620 (LFLP…AFLC).

The protein belongs to the ABC transporter superfamily. Macrolide exporter (TC 3.A.1.122) family. Homodimer. Part of the tripartite efflux system MacAB-TolC, which is composed of an inner membrane transporter, MacB, a periplasmic membrane fusion protein, MacA, and an outer membrane component, TolC. The complex forms a large protein conduit and can translocate molecules across both the inner and outer membranes. Interacts with MacA.

The protein localises to the cell inner membrane. Part of the tripartite efflux system MacAB-TolC. MacB is a non-canonical ABC transporter that contains transmembrane domains (TMD), which form a pore in the inner membrane, and an ATP-binding domain (NBD), which is responsible for energy generation. Confers resistance against macrolides. This is Macrolide export ATP-binding/permease protein MacB from Shigella flexneri.